A 366-amino-acid polypeptide reads, in one-letter code: uncharacterized protein (366 aa).

The tract at residues 1-135 is disordered; sequence MNQTGRTIGG…PPKNVDTIDK (135 aa). Positions 26–38 are enriched in basic and acidic residues; it reads PSEDRVSSRDETP. Position 69 is a phosphoserine (serine 69). Phosphothreonine is present on threonine 76. A Glycyl lysine isopeptide (Lys-Gly) (interchain with G-Cter in ubiquitin) cross-link involves residue lysine 78. The segment covering 97–108 has biased composition (basic residues); it reads QHNHHHHRRTSH. Residue lysine 187 forms a Glycyl lysine isopeptide (Lys-Gly) (interchain with G-Cter in ubiquitin) linkage. A Phosphothreonine modification is found at threonine 189. Lysine 242 participates in a covalent cross-link: Glycyl lysine isopeptide (Lys-Gly) (interchain with G-Cter in ubiquitin). A phosphoserine mark is found at serine 288 and serine 294. The tract at residues 313–366 is disordered; sequence THSGHLEQKDVDDNRTSVPVTATQGSGHEDVVKKENTGNKLLRRVKSLKTSKKH. Basic and acidic residues predominate over residues 316-327; that stretch reads GHLEQKDVDDNR. A compositionally biased stretch (polar residues) spans 328-338; it reads TSVPVTATQGS. Over residues 339–349 the composition is skewed to basic and acidic residues; that stretch reads GHEDVVKKENT. The span at 353–366 shows a compositional bias: basic residues; it reads LLRRVKSLKTSKKH. The residue at position 359 (serine 359) is a Phosphoserine.

This sequence belongs to the pal1 family.

Its subcellular location is the cytoplasm. It localises to the nucleus. This is an uncharacterized protein from Saccharomyces cerevisiae (strain ATCC 204508 / S288c) (Baker's yeast).